Reading from the N-terminus, the 264-residue chain is Apolipoprotein A-I (264 aa).

The first 18 residues, Met-1–Ala-18, serve as a signal peptide directing secretion. 2 tandem repeats follow at residues Leu-67–Thr-88 and Pro-89–Thr-110. The 10 X approximate tandem repeats stretch occupies residues Leu-67–Ala-264. One copy of the 3; half-length repeat lies at Lys-111–Arg-121. Tandem repeats lie at residues Pro-122–Ala-143, Pro-144–Thr-165, Pro-166–Ala-187, Pro-188–Ile-209, and Pro-210–Thr-231. The stretch at Pro-232–Thr-242 is one 9; half-length repeat. Repeat 10 spans residues Pro-243 to Ala-264.

The protein belongs to the apolipoprotein A1/A4/E family. As to expression, major protein of VLDL, HDL, LDL and in chylomicrons. Expressed in a number of tissues including liver, small intestine, lung, kidney, heart and muscle with highest expression in liver and small intestine.

It localises to the secreted. Its function is as follows. Participates in the reverse transport of cholesterol from tissues to the liver for excretion by promoting cholesterol efflux from tissues and by acting as a cofactor for the lecithin cholesterol acyltransferase (LCAT). The protein is Apolipoprotein A-I (APOA1) of Coturnix japonica (Japanese quail).